We begin with the raw amino-acid sequence, 305 residues long: 5'-hydroxyaverantin dehydrogenase stcG (305 aa).

NADP(+)-binding residues include Ser-25, Leu-27, Gln-48, Asp-68, Tyr-186, Lys-190, and Ser-221. Tyr-186 (proton acceptor) is an active-site residue. The active-site Lowers pKa of active site Tyr is the Lys-190.

The protein belongs to the short-chain dehydrogenases/reductases (SDR) family.

It catalyses the reaction (1'S,5'S)-5'-hydroxyaverantin + NAD(+) = (S)-5'-oxoaverantin + NADH + H(+). The enzyme catalyses (1'S,5'R)-5'-hydroxyaverantin + NAD(+) = (S)-5'-oxoaverantin + NADH + 2 H(+). It participates in mycotoxin biosynthesis; sterigmatocystin biosynthesis. Functionally, 5'-hydroxyaverantin dehydrogenase; part of the gene cluster that mediates the biosynthesis of sterigmatocystin (ST), a polyketide-derived furanocoumarin which is part of the most toxic and carcinogenic compounds among the known mycotoxins. The first step in the biosynthesis of sterigmatocystin is the production of hexanoate by the fatty acid synthase (FAS) units stcJ and stcK. The polyketide backbone is assembled by the non-reducing polyketide synthase stcA by condensation of the starter hexanoyl-CoA and 7 malonyl-CoA extender units followed by cyclization and release of norsolorinic acid. Norsolorinic acid is the first stable intermediate in the biosynthesis of sterigmatocystin and is converted into averantin (AVN) by the ketoreductase stcE which reduces the hexanoate ketone to an alcohol. Averantin is then oxidized into 5'-hydroxyaverantin (HAVN) by the cytochrome P450 monooxygenase stcF. 5'-hydroxyaverantin is further converted to 5'-oxyaverantin (OAVN) by the 5'-hydroxyaverantin dehydrogenase stcG. The next step is the conversion of OAVN into averufin (AVF) which is catalyzed by a yet to be identified enzyme. The cytochrome P450 monooxygenase stcB and the flavin-binding monooxygenase stcW are both required for the conversion of averufin to 1-hydroxyversicolorone. The esterase stcI probably catalyzes the formation of versiconal hemiacetal acetate from 1-hydroxyversicolorone. The oxydoreductase stcN then probably catalyzes the biosynthetic step from versiconal to versicolorin B (VERB). The next step is performed by the versicolorin B desaturase stcL to produce versicolorin A (VERA). The ketoreductase stcU and the cytochrome P450 monooxygenase stcS are involved in the conversion of versicolorin A to demethylsterigmatocystin. The Baeyer-Villiger oxidas stcQ and the reductase stcR might be involved in the biosynthetic step from versicolorin A to demethylsterigmatocystin. The final step in the biosynthesis of sterigmatocystin is the methylation of demethylsterigmatocystin catalyzed by the methyltransferase stcP. This chain is 5'-hydroxyaverantin dehydrogenase stcG, found in Emericella nidulans (strain FGSC A4 / ATCC 38163 / CBS 112.46 / NRRL 194 / M139) (Aspergillus nidulans).